The following is a 620-amino-acid chain: Chaperone protein HscA homolog (620 aa).

Belongs to the heat shock protein 70 family.

In terms of biological role, chaperone involved in the maturation of iron-sulfur cluster-containing proteins. Has a low intrinsic ATPase activity which is markedly stimulated by HscB. This is Chaperone protein HscA homolog from Acinetobacter baumannii (strain SDF).